A 73-amino-acid chain; its full sequence is Long neurotoxin 2 (73 aa).

5 disulfides stabilise this stretch: Cys-3-Cys-21, Cys-14-Cys-42, Cys-27-Cys-31, Cys-46-Cys-57, and Cys-58-Cys-63.

This sequence belongs to the three-finger toxin family. Long-chain subfamily. Type II alpha-neurotoxin sub-subfamily. In terms of tissue distribution, expressed by the venom gland.

Its subcellular location is the secreted. In terms of biological role, binds with high affinity to muscular (alpha-1/CHRNA1) and neuronal (alpha-7/CHRNA7) nicotinic acetylcholine receptor (nAChR) and inhibits acetylcholine from binding to the receptor, thereby impairing neuromuscular and neuronal transmission. This chain is Long neurotoxin 2, found in Ophiophagus hannah (King cobra).